The sequence spans 466 residues: Putative multidrug resistance protein MdtD (466 aa).

The next 14 membrane-spanning stretches (helical) occupy residues 11–31, 48–68, 71–91, 105–125, 137–157, 164–184, 194–214, 218–238, 262–282, 292–312, 328–347, 351–370, 402–422, and 429–449; these read LWIV…VNTA, SVIV…GWLA, IGVK…SLLC, VIQG…VMKI, FVTL…GFLV, WIFL…WFLM, FDIS…LALD, SLGI…IALL, FSIG…LPFM, GFSP…SMGI, VLVA…ALVA, WIWM…AIRF, SLGV…HIAA, and TVFL…ALIF.

It belongs to the major facilitator superfamily. TCR/Tet family.

The protein resides in the cell inner membrane. The sequence is that of Putative multidrug resistance protein MdtD from Pectobacterium atrosepticum (strain SCRI 1043 / ATCC BAA-672) (Erwinia carotovora subsp. atroseptica).